Reading from the N-terminus, the 182-residue chain is UPF0397 protein BCQ_2505 (182 aa).

A run of 5 helical transmembrane segments spans residues 9 to 29 (VVAI…GFSI), 40 to 60 (AILT…IGLI), 71 to 91 (WGIW…MGFI), 114 to 134 (ITGL…DIIV), and 142 to 162 (IVIQ…VLGL).

Belongs to the UPF0397 family.

It localises to the cell membrane. This chain is UPF0397 protein BCQ_2505, found in Bacillus cereus (strain Q1).